The primary structure comprises 643 residues: Threonine--tRNA ligase (643 aa).

The TGS domain maps to 1–61; that stretch reads MPIITLPDGS…EQDATLEIIT (61 aa). The interval 243–534 is catalytic; the sequence is DHRKIGKALD…ITEEYAGFFP (292 aa). Zn(2+)-binding residues include cysteine 334, histidine 385, and histidine 511.

This sequence belongs to the class-II aminoacyl-tRNA synthetase family. Homodimer. Zn(2+) is required as a cofactor.

The protein localises to the cytoplasm. It catalyses the reaction tRNA(Thr) + L-threonine + ATP = L-threonyl-tRNA(Thr) + AMP + diphosphate + H(+). Functionally, catalyzes the attachment of threonine to tRNA(Thr) in a two-step reaction: L-threonine is first activated by ATP to form Thr-AMP and then transferred to the acceptor end of tRNA(Thr). Also edits incorrectly charged L-seryl-tRNA(Thr). The sequence is that of Threonine--tRNA ligase from Haemophilus influenzae (strain PittEE).